We begin with the raw amino-acid sequence, 325 residues long: RepFIB replication protein A (325 aa).

Residues 279-298 form a disordered region; the sequence is APNDESKENPLPPSPAEKVS.

The protein belongs to the initiator RepB protein family.

In terms of biological role, this protein is essential for plasmid replication; it is involved in copy control functions. In vitro, binds to the DNA repeat units, BCDD'D'', EFG and HIJ. In Escherichia coli (strain K12), this protein is RepFIB replication protein A (repB).